A 142-amino-acid chain; its full sequence is Transcriptional regulator MraZ (142 aa).

2 consecutive SpoVT-AbrB domains span residues alanine 5–glutamate 51 and alanine 77–threonine 120.

Belongs to the MraZ family. Forms oligomers.

It is found in the cytoplasm. The protein resides in the nucleoid. The sequence is that of Transcriptional regulator MraZ from Acidovorax ebreus (strain TPSY) (Diaphorobacter sp. (strain TPSY)).